Consider the following 783-residue polypeptide: Endonuclease MutS2 (783 aa).

337–344 lines the ATP pocket; sequence GPNTGGKT. The 76-residue stretch at 708–783 folds into the Smr domain; it reads LHLRGYRYEE…GFGVTVAELK (76 aa).

It belongs to the DNA mismatch repair MutS family. MutS2 subfamily. As to quaternary structure, homodimer. Binds to stalled ribosomes, contacting rRNA.

In terms of biological role, endonuclease that is involved in the suppression of homologous recombination and thus may have a key role in the control of bacterial genetic diversity. Its function is as follows. Acts as a ribosome collision sensor, splitting the ribosome into its 2 subunits. Detects stalled/collided 70S ribosomes which it binds and splits by an ATP-hydrolysis driven conformational change. Acts upstream of the ribosome quality control system (RQC), a ribosome-associated complex that mediates the extraction of incompletely synthesized nascent chains from stalled ribosomes and their subsequent degradation. Probably generates substrates for RQC. The protein is Endonuclease MutS2 of Staphylococcus haemolyticus (strain JCSC1435).